We begin with the raw amino-acid sequence, 245 residues long: 1-(5-phosphoribosyl)-5-[(5-phosphoribosylamino)methylideneamino] imidazole-4-carboxamide isomerase (245 aa).

The active-site Proton acceptor is the Asp-7. The Proton donor role is filled by Asp-129.

It belongs to the HisA/HisF family.

The protein resides in the cytoplasm. The enzyme catalyses 1-(5-phospho-beta-D-ribosyl)-5-[(5-phospho-beta-D-ribosylamino)methylideneamino]imidazole-4-carboxamide = 5-[(5-phospho-1-deoxy-D-ribulos-1-ylimino)methylamino]-1-(5-phospho-beta-D-ribosyl)imidazole-4-carboxamide. It participates in amino-acid biosynthesis; L-histidine biosynthesis; L-histidine from 5-phospho-alpha-D-ribose 1-diphosphate: step 4/9. This chain is 1-(5-phosphoribosyl)-5-[(5-phosphoribosylamino)methylideneamino] imidazole-4-carboxamide isomerase, found in Salmonella heidelberg (strain SL476).